We begin with the raw amino-acid sequence, 149 residues long: Cytochrome c-556 (149 aa).

The signal sequence occupies residues 1 to 20 (MLRTVIVAGALVLTASAVMA). Residues M32, C137, C140, and H141 each coordinate heme c.

In terms of assembly, monomer. Post-translationally, binds 1 heme c group covalently per subunit.

Its function is as follows. Low-spin monoheme cytochrome c. The protein is Cytochrome c-556 of Rhodopseudomonas palustris (strain ATCC BAA-98 / CGA009).